The sequence spans 148 residues: Large ribosomal subunit protein bL9 (148 aa).

This sequence belongs to the bacterial ribosomal protein bL9 family.

Binds to the 23S rRNA. This Sulfurimonas denitrificans (strain ATCC 33889 / DSM 1251) (Thiomicrospira denitrificans (strain ATCC 33889 / DSM 1251)) protein is Large ribosomal subunit protein bL9.